Here is a 304-residue protein sequence, read N- to C-terminus: Ribonuclease Z (304 aa).

Zn(2+) is bound by residues His-63, His-65, Asp-67, His-68, His-143, Asp-213, and His-271. Catalysis depends on Asp-67, which acts as the Proton acceptor.

It belongs to the RNase Z family. Homodimer. The cofactor is Zn(2+).

It catalyses the reaction Endonucleolytic cleavage of RNA, removing extra 3' nucleotides from tRNA precursor, generating 3' termini of tRNAs. A 3'-hydroxy group is left at the tRNA terminus and a 5'-phosphoryl group is left at the trailer molecule.. In terms of biological role, zinc phosphodiesterase, which displays some tRNA 3'-processing endonuclease activity. Probably involved in tRNA maturation, by removing a 3'-trailer from precursor tRNA. The sequence is that of Ribonuclease Z from Bacteroides fragilis (strain ATCC 25285 / DSM 2151 / CCUG 4856 / JCM 11019 / LMG 10263 / NCTC 9343 / Onslow / VPI 2553 / EN-2).